We begin with the raw amino-acid sequence, 461 residues long: General transcription factor IIH subunit 2 (461 aa).

The span at 1 to 13 (MSKNIYNNNAQNK) shows a compositional bias: polar residues. Disordered regions lie at residues 1–37 (MSKN…DEDG) and 61–83 (LRPS…DRDG). Positions 61–71 (LRPSNQEERNT) are enriched in basic and acidic residues. The 178-residue stretch at 98–275 (HLCLILDLSK…ESLMLKCQPP (178 aa)) folds into the VWFA domain. The C4-type zinc finger occupies 315–332 (CPRCGVKSCELPTDCQIC). Residues 423-447 (TNGKTNGNEITNGNGNGNGNENENG) show a composition bias toward low complexity. Residues 423–461 (TNGKTNGNEITNGNGNGNGNENENGNGNGNGNGNGNGLH) form a disordered region. Residues 434–459 (NGNGNGNGNENENGNGNGNGNGNGNG) form a 13 X 2 tandem repeat of N-[GE] region. Residues 448 to 461 (NGNGNGNGNGNGLH) show a composition bias toward gly residues.

This sequence belongs to the GTF2H2 family. In terms of assembly, component of the 7-subunit TFIIH core complex composed of XPB/repB, XPD/repD, gtf2h1, gtf2h2, gtf2h3, gtf2h4 and gtf2h5, which is active in NER. The core complex associates with the 3-subunit CDK-activating kinase (CAK) module composed of cycH/cyclin H, cdk7 and mnat1 to form the 10-subunit holoenzyme (holo-TFIIH) active in transcription.

The protein localises to the nucleus. Component of the general transcription and DNA repair factor IIH (TFIIH) core complex, which is involved in general and transcription-coupled nucleotide excision repair (NER) of damaged DNA and, when complexed to CAK, in RNA transcription by RNA polymerase II. In NER, TFIIH acts by opening DNA around the lesion to allow the excision of the damaged oligonucleotide and its replacement by a new DNA fragment. In transcription, TFIIH has an essential role in transcription initiation. When the pre-initiation complex (PIC) has been established, TFIIH is required for promoter opening and promoter escape. Phosphorylation of the C-terminal tail (CTD) of the largest subunit of RNA polymerase II by the kinase module CAK controls the initiation of transcription. This is General transcription factor IIH subunit 2 (gtf2h2) from Dictyostelium discoideum (Social amoeba).